Consider the following 83-residue polypeptide: Cytochrome c-554(548) (83 aa).

Heme c contacts are provided by Cys-14, Cys-17, His-18, and Met-63.

As to quaternary structure, homodimer. In terms of processing, binds 1 heme c group covalently per subunit.

The chain is Cytochrome c-554(548) from Halomonas halodenitrificans (strain ATCC 12084 / NCIMB 8669) (Paracoccus halodenitrificans).